The following is a 414-amino-acid chain: Protein SOSEKI 2 (414 aa).

The DIX-like oligomerization domain stretch occupies residues 44–135 (RRVQVVYYLT…YVLKGSEITD (92 aa)). The tract at residues 171-273 (SFDDAELYVG…GDPVEPGSGR (103 aa)) is disordered. Over residues 173 to 192 (DDAELYVGEEEEEEDGEYEL) the composition is skewed to acidic residues. The segment covering 205–229 (PQSRCSRGVSTETMESTEQKPNLTK) has biased composition (polar residues). Basic and acidic residues predominate over residues 230–242 (TEQDLQVRSDSSD). The Association to cell membranes motif lies at 283-284 (CG).

Belongs to the SOSEKI family. As to quaternary structure, homodimer. Forms long polymer filaments with other SOKs proteins polymers (e.g. SOK1, SOK2, SOK3 and SOK4) crucial for polar localization and biological activity. Binds to ANGUSTIFOLIA (AN). In terms of tissue distribution, expressed during embryogenesis and in roots.

Its subcellular location is the cell membrane. Part of a three-gene cluster containing FLC, UFC and DFC, which is coordinately regulated in response to vernalization. Also regulated by FLX. SOSEKI proteins (SOK1-5) locally interpret global polarity cues and can influence cell division orientation to coordinate cell polarization relative to body axes, probably by guiding ANGUSTIFOLIA (AN) polarized localization. This chain is Protein SOSEKI 2, found in Arabidopsis thaliana (Mouse-ear cress).